The following is a 1337-amino-acid chain: MMEIQMDEGGGVVVYQDDYCSGSVMSERVSGLAGSIYREFERLIHCYDEEVVKELMPLVVNVLENLDSVLSENQEHEVELELLREDNEQLLTQYEREKALRKQAEEKFIEFEDALEQEKKELQIQVEHYEFQTRQLELKAKNYADQISRLEERESEMKKEYNALHQRHTEMIQTYVEHIERSKMQQVGGSGQTESSLPGRSRKERPTSLNVFPLADGMVRAQMGGKLVPAGDHWHLSDLGQLQSSSSYQCPNDEMSESGQSSAAATPSTTGTKSNTPTSSVPSAAVTPLNESLQPLGDYVSVTKNNKQAREKRNSRNMEVQVTQEMRNVSIGMGSSDEWSDVQDIIDSTPELDVCPETRLERTGSSPTQGIVNKAFGINTDSLYHELSTAGSEVIGDVDEGADLLGEFSVRDDFFGMGKEVGNLLLENSQLLETKNALNVVKNDLIAKVDQLSGEQEVLKGELEAAKQAKVKLENRIKELEEELKRVKSEAVTARREPREEVEDVSSYLCTELDKIPMAQRRRFTRVEMARVLMERNQYKERLMELQEAVRWTEMIRASREHPSVQEKKKSTIWQFFSRLFSSSSSPPPAKRSYPSVNIHYKSPTAAGFSQRRSHALCQISAGSRPLEFFPDDDCTSSARREQKREQYRQVREHVRNDDGRLQACGWSLPAKYKQLSPNGGQEDTRMKNVPVPVYCRPLVEKDPSTKLWCAAGVNLSGWKPHEEDSSNGPKPVPGRDPLTCDREGEGEPKSTHPSPEKKKAKETPEADATSSRVWILTSTLTTSKVVIIDANQPGTIVDQFTVCNAHVLCISSIPAASDSDYPPGEMFLDSDVNPEDSGADGVLAGITLVGCATRCNVPRSNCSSRGDTPVLDKGQGDVATTANGKVNPSQSTEEATEATEVPDPGPSESEATTVRPGPLTEHVFTDPAPTPSSSTQPASENGSESNGTIVQPQVEPSGELSTTTSSAAPTMWLGAQNGWLYVHSAVANWKKCLHSIKLKDSVLSLVHVKGRVLVALADGTLAIFHRGEDGQWDLSNYHLMDLGHPHHSIRCMAVVNDRVWCGYKNKVHVIQPKTMQIEKSFDAHPRRESQVRQLAWIGDGVWVSIRLDSTLRLYHAHTHQHLQDVDIEPYVSKMLGTGKLGFSFVRITALLIAGNRLWVGTGNGVVISIPLTETVVLHRGQLLGLRANKTSPTSGEGTRPGGIIHVYGDDSSDKAASSFIPYCSMAQAQLCFHGHRDAVKFFVSVPGNVLATLNGSVLDSPSEGPGPAAPAADAEGQKLKNALVLSGGEGYIDFRIGDGEDDETEECAGDVNQTKPSLSKAERSHIIVWQVSYTPE.

In terms of domain architecture, RH1 spans 12-100 (VVVYQDDYCS…LTQYEREKAL (89 aa)). The interval 50 to 80 (EVVKELMPLVVNVLENLDSVLSENQEHEVEL) is kinesin-binding domain (KBD); essential for its function in axon elongation. Positions 58–177 (LVVNVLENLD…HTEMIQTYVE (120 aa)) form a coiled coil. Disordered regions lie at residues 183 to 211 (KMQQ…SLNV) and 245 to 285 (SSSY…PSAA). Positions 184–198 (MQQVGGSGQTESSLP) are enriched in polar residues. The interval 210–226 (NVFPLADGMVRAQMGGK) is JNK-binding domain (JBD); essential for its function in axon elongation. Positions 261–270 (SSAAATPSTT) are enriched in low complexity. 3 positions are modified to phosphothreonine; by MAPK: T266, T276, and T287. Residues 271–282 (GTKSNTPTSSVP) show a composition bias toward polar residues. A phosphoserine; by ROCK1 mark is found at S315 and S365. At S366 the chain carries Phosphoserine. Residues 424 to 459 (LLLENSQLLETKNALNVVKNDLIAKVDQLSGEQEVL) are leucine zipper-like domain (LZ); essential for its function in axon elongation. Positions 437-555 (ALNVVKNDLI…LQEAVRWTEM (119 aa)) form a coiled coil. The segment at 459–515 (LKGELEAAKQAKVKLENRIKELEEELKRVKSEAVTARREPREEVEDVSSYLCTELDK) is interaction with NTRK2. One can recognise an RH2 domain in the interval 521–595 (RRRFTRVEMA…SPPPAKRSYP (75 aa)). Phosphoserine is present on S603. The tract at residues 633–655 (DDCTSSARREQKREQYRQVREHV) is disordered. Residues 639-655 (ARREQKREQYRQVREHV) are compositionally biased toward basic and acidic residues. S677 bears the Phosphoserine mark. Disordered stretches follow at residues 719-772 (WKPH…ATSS) and 859-966 (PRSN…TTTS). The segment covering 739-765 (LTCDREGEGEPKSTHPSPEKKKAKETP) has biased composition (basic and acidic residues). Composition is skewed to polar residues over residues 879–892 (VATT…PSQS) and 941–952 (ENGSESNGTIVQ).

This sequence belongs to the JIP scaffold family. Forms homo- or heterooligomeric complexes. The central region of MAPK8IP3 interacts with the C-terminal of MAPK8IP2 but not MAPK8IP1. Binds specific components of the JNK signaling pathway namely MAPK8/JNK1, MAPK9/JNK2 and MAPK10/JNK3 to the N-terminal region, MAP2K4/MKK4 and MAP2K7/MKK7 to the central region and MAP3K11 to the C-terminal region. Binds the TPR motif-containing C-terminal of kinesin light chain, KLC1. Pre-assembled MAPK8IP1 scaffolding complexes are then transported as a cargo of kinesin, to the required subcellular location. Interacts with ROCK1 and this interaction is enhanced by ultraviolet-B (UVB) radiation. Interacts with SH3RF2. Interacts with NTRK2/TRKB and NTRK3/TRKC. Phosphorylation by ROCK1 is crucial for the recruitment of JNK. As to expression, highly expressed throughout many regions of the brain and at lower levels in the heart, liver, lung, testes and kidney. All isoforms have been identified in the brain, isoform 1a is also expressed in the spleen and lung.

The protein resides in the cytoplasm. It localises to the golgi apparatus. It is found in the cytoplasmic vesicle. The protein localises to the cell projection. Its subcellular location is the growth cone. The protein resides in the axon. It localises to the dendrite. It is found in the perinuclear region. Its function is as follows. The JNK-interacting protein (JIP) group of scaffold proteins selectively mediates JNK signaling by aggregating specific components of the MAPK cascade to form a functional JNK signaling module. May function as a regulator of vesicle transport, through interactions with the JNK-signaling components and motor proteins. Promotes neuronal axon elongation in a kinesin- and JNK-dependent manner. Activates cofilin at axon tips via local activation of JNK, thereby regulating filopodial dynamics and enhancing axon elongation. Its binding to kinesin heavy chains (KHC), promotes kinesin-1 motility along microtubules and is essential for axon elongation and regeneration. Regulates cortical neuronal migration by mediating NTRK2/TRKB anterograde axonal transport during brain development. Acts as an adapter that bridges the interaction between NTRK2/TRKB and KLC1 and drives NTRK2/TRKB axonal but not dendritic anterograde transport, which is essential for subsequent BDNF-triggered signaling and filopodia formation. In Mus musculus (Mouse), this protein is C-Jun-amino-terminal kinase-interacting protein 3 (Mapk8ip3).